Consider the following 146-residue polypeptide: Lipoprotein signal peptidase (146 aa).

A run of 3 helical transmembrane segments spans residues 10–30 (GLFV…LGGF), 54–74 (FLEG…LLFL), and 80–100 (FFVA…SNIL). Catalysis depends on residues D110 and D127. A helical membrane pass occupies residues 118 to 138 (FEFAIFNFADVMIDVAVALFL).

Belongs to the peptidase A8 family.

Its subcellular location is the cell inner membrane. The catalysed reaction is Release of signal peptides from bacterial membrane prolipoproteins. Hydrolyzes -Xaa-Yaa-Zaa-|-(S,diacylglyceryl)Cys-, in which Xaa is hydrophobic (preferably Leu), and Yaa (Ala or Ser) and Zaa (Gly or Ala) have small, neutral side chains.. Its pathway is protein modification; lipoprotein biosynthesis (signal peptide cleavage). Its function is as follows. This protein specifically catalyzes the removal of signal peptides from prolipoproteins. In Wolinella succinogenes (strain ATCC 29543 / DSM 1740 / CCUG 13145 / JCM 31913 / LMG 7466 / NCTC 11488 / FDC 602W) (Vibrio succinogenes), this protein is Lipoprotein signal peptidase.